The chain runs to 557 residues: Protein NRT1/ PTR FAMILY 5.10 (557 aa).

The next 2 membrane-spanning stretches (helical) occupy residues 49–67 (FAYY…GPLG) and 79–99 (AWSG…DSFL). T104 is subject to Phosphothreonine. 10 helical membrane passes run 105–125 (ILAA…SAMI), 144–164 (VITF…HKPC), 186–206 (SFFN…LWVL), 215–235 (WALG…VLLL), 320–340 (APIW…PTFF), 365–385 (FISL…IPIA), 401–421 (IGTG…VEMK), 443–463 (VWWL…AMVG), 479–499 (VGLA…SFMI), and 526–546 (YFYW…LYVA).

The protein belongs to the major facilitator superfamily. Proton-dependent oligopeptide transporter (POT/PTR) (TC 2.A.17) family. As to expression, expressed in shoots, roots and stems. Detected in leaves, flowers and siliques.

The protein resides in the membrane. This is Protein NRT1/ PTR FAMILY 5.10 (NPF5.10) from Arabidopsis thaliana (Mouse-ear cress).